We begin with the raw amino-acid sequence, 66 residues long: DNA-directed RNA polymerase subunit Rpo10 (66 aa).

Residues Cys7, Cys10, Cys44, and Cys45 each coordinate Zn(2+).

It belongs to the archaeal Rpo10/eukaryotic RPB10 RNA polymerase subunit family. Part of the RNA polymerase complex. Zn(2+) serves as cofactor.

It is found in the cytoplasm. It catalyses the reaction RNA(n) + a ribonucleoside 5'-triphosphate = RNA(n+1) + diphosphate. In terms of biological role, DNA-dependent RNA polymerase (RNAP) catalyzes the transcription of DNA into RNA using the four ribonucleoside triphosphates as substrates. This chain is DNA-directed RNA polymerase subunit Rpo10, found in Sulfurisphaera tokodaii (strain DSM 16993 / JCM 10545 / NBRC 100140 / 7) (Sulfolobus tokodaii).